A 27-amino-acid chain; its full sequence is Trypsin inhibitor 1 (27 aa).

In terms of assembly, homodimer. Contains disulfide bonds. In terms of processing, glycosylated.

In terms of biological role, inhibits trypsin (IC(50)=1.25 uM) but not chymotrypsin or papain. Has antibacterial activity against S.enterica ATCC 10708 (MIC=5 ug/ml) and S.aureus ATCC 25923 (MIC=5 ug/ml) but not against B.subtilis ATCC 6633 or P.aeruginosa ATCC 25619. Has no hemolytic activity against human erythrocytes. Is not toxic to mice. This Jatropha curcas (Barbados nut) protein is Trypsin inhibitor 1.